We begin with the raw amino-acid sequence, 365 residues long: MDLVLEVADHYVLDDLYAKVLPASLAANIPVKWQKLLGLNSGFSNSTILQETLNSKNAVKECRRFYGQVPFLFDMSTTSFASLLPRSSILREFLSLWVIVTIFGLLLYLFTASLSYVFVFDKSIFNHPRYLKNQMAMEIKLAVSAIPWMSMLTVPWFVMELNGHSKLYMKIDYENHGVRKLIIEYFTFIFFTDCGVYLAHRWLHWPRVYRALHKPHHKWLVCTPFASHSFHPVDGFLQSISYHIYPLILPLHKVSYLILFTFVNFWTVMIHDGQYLSNNPAVNGTACHTVHHLYFNYNYGQFTTLWDRLGGSYRRPDDSLFDPKLRDAKETWDAQVKEVEHFIKEVEGDDNDRIYENDPNTKKNN.

Over Met1–Glu92 the chain is Cytoplasmic. The helical transmembrane segment at Phe93–Ser113 threads the bilayer. The Lumenal segment spans residues Leu114 to Lys140. The helical transmembrane segment at Leu141 to Leu161 threads the bilayer. Over Asn162–Tyr242 the chain is Cytoplasmic. One can recognise a Fatty acid hydroxylase domain in the interval Thr187–Gly311. Positions His200–His204 match the Histidine box-1 motif. A Histidine box-2 motif is present at residues His213–His217. The chain crosses the membrane as a helical span at residues His243 to Val263. The Lumenal portion of the chain corresponds to Asn264–Asn365. A Histidine box-3 motif is present at residues His288–His292. Residues Lys324 and Lys344 each participate in a glycyl lysine isopeptide (Lys-Gly) (interchain with G-Cter in ubiquitin) cross-link.

This sequence belongs to the sterol desaturase family. In terms of assembly, interacts with ERG28. Requires Fe cation as cofactor.

The protein resides in the endoplasmic reticulum membrane. It catalyses the reaction episterol + 2 Fe(II)-[cytochrome b5] + O2 + 2 H(+) = 5-dehydroepisterol + 2 Fe(III)-[cytochrome b5] + 2 H2O. It participates in steroid metabolism; ergosterol biosynthesis; ergosterol from zymosterol: step 3/5. Its function is as follows. C-5 sterol desaturase; part of the third module of ergosterol biosynthesis pathway that includes the late steps of the pathway. ERG3 catalyzes the introduction of a C-5 double bond in the B ring to produce 5-dehydroepisterol. The third module or late pathway involves the ergosterol synthesis itself through consecutive reactions that mainly occur in the endoplasmic reticulum (ER) membrane. Firstly, the squalene synthase ERG9 catalyzes the condensation of 2 farnesyl pyrophosphate moieties to form squalene, which is the precursor of all steroids. Squalene synthase is crucial for balancing the incorporation of farnesyl diphosphate (FPP) into sterol and nonsterol isoprene synthesis. Secondly, the squalene epoxidase ERG1 catalyzes the stereospecific oxidation of squalene to (S)-2,3-epoxysqualene, which is considered to be a rate-limiting enzyme in steroid biosynthesis. Then, the lanosterol synthase ERG7 catalyzes the cyclization of (S)-2,3 oxidosqualene to lanosterol, a reaction that forms the sterol core. In the next steps, lanosterol is transformed to zymosterol through a complex process involving various demethylation, reduction and desaturation reactions. The lanosterol 14-alpha-demethylase ERG11 (also known as CYP51) catalyzes C14-demethylation of lanosterol to produce 4,4'-dimethyl cholesta-8,14,24-triene-3-beta-ol, which is critical for ergosterol biosynthesis. The C-14 reductase ERG24 reduces the C14=C15 double bond of 4,4-dimethyl-cholesta-8,14,24-trienol to produce 4,4-dimethyl-cholesta-8,24-dienol. 4,4-dimethyl-cholesta-8,24-dienol is substrate of the C-4 demethylation complex ERG25-ERG26-ERG27 in which ERG25 catalyzes the three-step monooxygenation required for the demethylation of 4,4-dimethyl and 4alpha-methylsterols, ERG26 catalyzes the oxidative decarboxylation that results in a reduction of the 3-beta-hydroxy group at the C-3 carbon to an oxo group, and ERG27 is responsible for the reduction of the keto group on the C-3. ERG28 has a role as a scaffold to help anchor ERG25, ERG26 and ERG27 to the endoplasmic reticulum and ERG29 regulates the activity of the iron-containing C4-methylsterol oxidase ERG25. Then, the sterol 24-C-methyltransferase ERG6 catalyzes the methyl transfer from S-adenosyl-methionine to the C-24 of zymosterol to form fecosterol. The C-8 sterol isomerase ERG2 catalyzes the reaction which results in unsaturation at C-7 in the B ring of sterols and thus converts fecosterol to episterol. The sterol-C5-desaturase ERG3 then catalyzes the introduction of a C-5 double bond in the B ring to produce 5-dehydroepisterol. The C-22 sterol desaturase ERG5 further converts 5-dehydroepisterol into ergosta-5,7,22,24(28)-tetraen-3beta-ol by forming the C-22(23) double bond in the sterol side chain. Finally, ergosta-5,7,22,24(28)-tetraen-3beta-ol is substrate of the C-24(28) sterol reductase ERG4 to produce ergosterol. This Saccharomyces cerevisiae (strain ATCC 204508 / S288c) (Baker's yeast) protein is Delta(7)-sterol 5(6)-desaturase ERG3.